Consider the following 1171-residue polypeptide: Pesticidal crystal protein Cry1Ea (1171 aa).

Positions 1094 to 1124 (ESNSSVHASVYEEKSYTDRRRENPCESNRGY) are disordered. A compositionally biased stretch (basic and acidic residues) spans 1103–1117 (VYEEKSYTDRRRENP).

It belongs to the delta endotoxin family.

Its function is as follows. Promotes colloidosmotic lysis by binding to the midgut epithelial cells of many lepidopteran larvae including Spodoptera species. This chain is Pesticidal crystal protein Cry1Ea (cry1Ea), found in Bacillus thuringiensis subsp. kenyae.